A 541-amino-acid polypeptide reads, in one-letter code: Membrane protein insertase YidC (541 aa).

Transmembrane regions (helical) follow at residues 6–26, 325–345, 349–369, 420–440, 457–477, and 500–520; these read NILL…WQAD, LVVD…LLMF, FVGN…GLLF, GGCL…WVLL, LSVQ…MFIM, and VIFT…WLVG.

This sequence belongs to the OXA1/ALB3/YidC family. Type 1 subfamily. Interacts with the Sec translocase complex via SecD. Specifically interacts with transmembrane segments of nascent integral membrane proteins during membrane integration.

The protein localises to the cell inner membrane. In terms of biological role, required for the insertion and/or proper folding and/or complex formation of integral membrane proteins into the membrane. Involved in integration of membrane proteins that insert both dependently and independently of the Sec translocase complex, as well as at least some lipoproteins. Aids folding of multispanning membrane proteins. This Shewanella sp. (strain W3-18-1) protein is Membrane protein insertase YidC.